The chain runs to 177 residues: Large ribosomal subunit protein uL6 (177 aa).

This sequence belongs to the universal ribosomal protein uL6 family. In terms of assembly, part of the 50S ribosomal subunit.

In terms of biological role, this protein binds to the 23S rRNA, and is important in its secondary structure. It is located near the subunit interface in the base of the L7/L12 stalk, and near the tRNA binding site of the peptidyltransferase center. This Polynucleobacter asymbioticus (strain DSM 18221 / CIP 109841 / QLW-P1DMWA-1) (Polynucleobacter necessarius subsp. asymbioticus) protein is Large ribosomal subunit protein uL6.